Consider the following 193-residue polypeptide: SCO1 protein homolog (193 aa).

An N-terminal signal peptide occupies residues 1–18; that stretch reads MKVIKGLTAGLIFLFLCA. Residue Cys-19 is the site of N-palmitoyl cysteine attachment. The S-diacylglycerol cysteine moiety is linked to residue Cys-19. The Thioredoxin domain maps to 26-191; sequence DPLNYEVEPF…IISDVKSAST (166 aa). 3 residues coordinate Cu cation: Cys-64, Cys-68, and His-154.

It belongs to the SCO1/2 family. As to quaternary structure, monomer.

The protein localises to the cell membrane. In terms of biological role, necessary for insertion of copper into the active site of cytochrome c oxidase. May play a role in copper homeostasis or redox signaling. The sequence is that of SCO1 protein homolog (ypmQ) from Bacillus subtilis (strain 168).